The following is a 294-amino-acid chain: MASTRDIRRRIKSVKNTRQITKAMELVAASKMKKAQQAAVAGRPYAELMAQMLATLGDRVEEAQHPFLVQREVKTRGIILITTDKGLAGPLNANLFKLVTDIQSPAKYVVVGRKGAQFIARTRRDLLAEFQVSDRAAFAEVKVVVEFMTKQFIDGVVDSVEVIWPRFKNTLVQIPTIAQLLPLRGVQHAVESLQHGTGVSAPRSPAVEAQMLFEPDPVSVLSALLPLYINREVYHQVLDAKASEHSARMVAMKTAKDNATKLLDDLTLEYNKARQAGITQEIIEIAAAQFAAAS.

This sequence belongs to the ATPase gamma chain family. As to quaternary structure, F-type ATPases have 2 components, CF(1) - the catalytic core - and CF(0) - the membrane proton channel. CF(1) has five subunits: alpha(3), beta(3), gamma(1), delta(1), epsilon(1). CF(0) has three main subunits: a, b and c.

It is found in the cell membrane. Functionally, produces ATP from ADP in the presence of a proton gradient across the membrane. The gamma chain is believed to be important in regulating ATPase activity and the flow of protons through the CF(0) complex. The chain is ATP synthase gamma chain from Opitutus terrae (strain DSM 11246 / JCM 15787 / PB90-1).